We begin with the raw amino-acid sequence, 322 residues long: Serine/threonine-protein phosphatase PP1 isozyme 6 (322 aa).

At M1 the chain carries N-acetylmethionine. Residues D61, H63, D89, and N121 each coordinate Mn(2+). H122 functions as the Proton donor in the catalytic mechanism. Residues H170 and H245 each contribute to the Mn(2+) site. The disordered stretch occupies residues 303–322 (GFNNNVPRPGTPPHKGGKGR).

It belongs to the PPP phosphatase family. PP-1 subfamily. It depends on Mn(2+) as a cofactor. In terms of tissue distribution, strongly up-regulated within developing flowers, especially in the tapetum, the developing and mature pollen and in the ovaries.

Its subcellular location is the nucleus. The protein localises to the cytoplasm. The catalysed reaction is O-phospho-L-seryl-[protein] + H2O = L-seryl-[protein] + phosphate. The enzyme catalyses O-phospho-L-threonyl-[protein] + H2O = L-threonyl-[protein] + phosphate. Its activity is regulated as follows. Phosphatase activity is strongly reduced by the protein phosphatase inhibitor 2 (I-2). Its function is as follows. Serine/threonine-protein phosphatase that possesses phosphatase activity toward para-nitrophenyl phosphate (pNPP) in vitro. This is Serine/threonine-protein phosphatase PP1 isozyme 6 from Arabidopsis thaliana (Mouse-ear cress).